Consider the following 731-residue polypeptide: 1,4-alpha-glucan branching enzyme GlgB (731 aa).

The active-site Nucleophile is the aspartate 408. The active-site Proton donor is glutamate 461.

This sequence belongs to the glycosyl hydrolase 13 family. GlgB subfamily. Monomer.

The enzyme catalyses Transfers a segment of a (1-&gt;4)-alpha-D-glucan chain to a primary hydroxy group in a similar glucan chain.. Its pathway is glycan biosynthesis; glycogen biosynthesis. Functionally, catalyzes the formation of the alpha-1,6-glucosidic linkages in glycogen by scission of a 1,4-alpha-linked oligosaccharide from growing alpha-1,4-glucan chains and the subsequent attachment of the oligosaccharide to the alpha-1,6 position. The chain is 1,4-alpha-glucan branching enzyme GlgB from Corynebacterium efficiens (strain DSM 44549 / YS-314 / AJ 12310 / JCM 11189 / NBRC 100395).